Consider the following 87-residue polypeptide: Cell division topological specificity factor (87 aa).

It belongs to the MinE family.

Prevents the cell division inhibition by proteins MinC and MinD at internal division sites while permitting inhibition at polar sites. This ensures cell division at the proper site by restricting the formation of a division septum at the midpoint of the long axis of the cell. The protein is Cell division topological specificity factor of Roseiflexus sp. (strain RS-1).